A 227-amino-acid chain; its full sequence is Orotidine 5'-phosphate decarboxylase (227 aa).

Substrate is bound by residues D8, K30, 59–68 (DLKLYDIPYT), T118, R178, Q187, G207, and R208. The Proton donor role is filled by K61.

It belongs to the OMP decarboxylase family. Type 1 subfamily. Homodimer.

The catalysed reaction is orotidine 5'-phosphate + H(+) = UMP + CO2. The protein operates within pyrimidine metabolism; UMP biosynthesis via de novo pathway; UMP from orotate: step 2/2. Catalyzes the decarboxylation of orotidine 5'-monophosphate (OMP) to uridine 5'-monophosphate (UMP). This is Orotidine 5'-phosphate decarboxylase from Helicobacter pylori (strain P12).